The primary structure comprises 581 residues: Frizzled-3 (581 aa).

An N-terminal signal peptide occupies residues 1–19 (MYAASILILHLTWAVATIA). Residues 20 to 237 (ANGAGHNGPV…TSSQKKTSET (218 aa)) lie on the Extracellular side of the membrane. An FZ domain is found at 35-156 (PNGLQCQPIA…PEKHELCMQI (122 aa)). 5 disulfides stabilise this stretch: Cys-40/Cys-101, Cys-48/Cys-94, Cys-85/Cys-123, Cys-112/Cys-153, and Cys-116/Cys-141. Asn-54 carries N-linked (GlcNAc...) asparagine glycosylation. The N-linked (GlcNAc...) asparagine glycan is linked to Asn-206. Residues 238–258 (LILGLSAVCFVLTLFALVTFW) traverse the membrane as a helical segment. Residues 259-270 (AEPTRFGYPERP) are Cytoplasmic-facing. The chain crosses the membrane as a helical span at residues 271 to 291 (VLFLCLCYNLFSVCYLERIVF). Over 292-321 (HNQARMHDVELQGRLMRPGCLLTPPCLASY) the chain is Extracellular. A helical membrane pass occupies residues 322 to 342 (ITTSYLSLCAASWWLIFALCF). At 343–359 (YLSSHKKWSSEALEKRS) the chain is on the cytoplasmic side. A helical membrane pass occupies residues 360–380 (GLFHVLAWVPPLAPPIAALLL). Over 381–393 (EKVRPSELTGMCY) the chain is Extracellular. The helical transmembrane segment at 394–414 (APGFVELPALVLLLLGLYFTL) threads the bilayer. Residues 415 to 442 (RASRSLLSLQQQLQPTLAHHRFGQIRKR) lie on the Cytoplasmic side of the membrane. A helical transmembrane segment spans residues 443–463 (FVLFSLLYFAPTTAGVVAALC). Residues 464–488 (ERYADSVPSCSTPDDCLSPTPLSAW) lie on the Extracellular side of the membrane. Residues 489 to 509 (PALVRIFFQLVGGTLTGLWVW) form a helical membrane-spanning segment. The Cytoplasmic portion of the chain corresponds to 510–581 (SRKTCESYRN…PVYNPNQSRV (72 aa)). A PDZ-binding motif is present at residues 579 to 581 (SRV).

The protein belongs to the G-protein coupled receptor Fz/Smo family. As to expression, wing, leg and eye imaginal disks. In embryos, expressed is seen in brain, proventriculus, Malpighian tubules, anal plate and visceral mesoderm of parasegment 8.

Its subcellular location is the membrane. Its function is as follows. Receptor for Wnt proteins. Most of frizzled receptors are coupled to the beta-catenin canonical signaling pathway, which leads to the activation of disheveled proteins, inhibition of GSK-3 kinase, nuclear accumulation of beta-catenin and activation of Wnt target genes. A second signaling pathway involving PKC and calcium fluxes has been seen for some family members, but it is not yet clear if it represents a distinct pathway or if it can be integrated in the canonical pathway, as PKC seems to be required for Wnt-mediated inactivation of GSK-3 kinase. Both pathways seem to involve interactions with G-proteins. Required to coordinate the cytoskeletons of epidermal cells to produce a parallel array of cuticular hairs and bristles. In Drosophila melanogaster (Fruit fly), this protein is Frizzled-3 (fz3).